We begin with the raw amino-acid sequence, 204 residues long: Large ribosomal subunit protein eL15A (204 aa).

The segment at 164–185 is disordered; sequence LTATGKKSRGINKGHKFNNTKA. Positions 169–185 are enriched in basic residues; the sequence is KKSRGINKGHKFNNTKA.

This sequence belongs to the eukaryotic ribosomal protein eL15 family. As to quaternary structure, component of the large ribosomal subunit (LSU). Mature yeast ribosomes consist of a small (40S) and a large (60S) subunit. The 40S small subunit contains 1 molecule of ribosomal RNA (18S rRNA) and 33 different proteins (encoded by 57 genes). The large 60S subunit contains 3 rRNA molecules (25S, 5.8S and 5S rRNA) and 46 different proteins (encoded by 81 genes).

It is found in the cytoplasm. Functionally, component of the ribosome, a large ribonucleoprotein complex responsible for the synthesis of proteins in the cell. The small ribosomal subunit (SSU) binds messenger RNAs (mRNAs) and translates the encoded message by selecting cognate aminoacyl-transfer RNA (tRNA) molecules. The large subunit (LSU) contains the ribosomal catalytic site termed the peptidyl transferase center (PTC), which catalyzes the formation of peptide bonds, thereby polymerizing the amino acids delivered by tRNAs into a polypeptide chain. The nascent polypeptides leave the ribosome through a tunnel in the LSU and interact with protein factors that function in enzymatic processing, targeting, and the membrane insertion of nascent chains at the exit of the ribosomal tunnel. This is Large ribosomal subunit protein eL15A from Saccharomyces cerevisiae (strain ATCC 204508 / S288c) (Baker's yeast).